Here is a 388-residue protein sequence, read N- to C-terminus: Fructose-bisphosphate aldolase, chloroplastic (388 aa).

The transit peptide at methionine 1 to alanine 38 directs the protein to the chloroplast. Substrate is bound at residue arginine 72. Glutamate 215 serves as the catalytic Proton acceptor. The Schiff-base intermediate with dihydroxyacetone-P role is filled by lysine 257. Residues serine 299–glycine 301 and arginine 329 contribute to the substrate site.

It belongs to the class I fructose-bisphosphate aldolase family. As to quaternary structure, homotetramer. As to expression, expressed in leaf mesophyll cells.

The protein resides in the plastid. It localises to the chloroplast. Its subcellular location is the plastoglobule. It catalyses the reaction beta-D-fructose 1,6-bisphosphate = D-glyceraldehyde 3-phosphate + dihydroxyacetone phosphate. It participates in carbohydrate degradation; glycolysis; D-glyceraldehyde 3-phosphate and glycerone phosphate from D-glucose: step 4/4. In terms of biological role, plays a key role in glycolysis and gluconeogenesis. The polypeptide is Fructose-bisphosphate aldolase, chloroplastic (Oryza sativa subsp. japonica (Rice)).